Consider the following 386-residue polypeptide: uncharacterized protein (386 aa).

Transmembrane regions (helical) follow at residues 3–23 (WFSL…LVAI), 42–62 (LVGH…IFLW), 72–92 (FASF…SLFG), 102–122 (VPTI…LGVF), 145–165 (ILST…IAYF), 183–203 (FGGH…WLLL), 212–232 (WFLN…QIFL), 244–264 (TWGY…ITLV), 276–296 (ILVL…MIVG), 308–328 (VIAS…QELG), and 333–353 (LGKF…FLSS).

To R.prowazekii RP382.

It is found in the cell membrane. This is an uncharacterized protein from Aquifex aeolicus (strain VF5).